Consider the following 271-residue polypeptide: Putative pirin-like protein At3g59260 (271 aa).

The protein belongs to the pirin family.

It is found in the nucleus. The sequence is that of Putative pirin-like protein At3g59260 from Arabidopsis thaliana (Mouse-ear cress).